A 73-amino-acid polypeptide reads, in one-letter code: Conotoxin Lt9a (73 aa).

Positions 1–23 (MTLTKSAVLILVLLLAFDNFADV) are cleaved as a signal peptide. A propeptide spanning residues 24-40 (QPGLITMGGGRLSNLLS) is cleaved from the precursor. Disulfide bonds link C48-C62, C53-C64, and C59-C69.

It belongs to the conotoxin P superfamily. Expressed by the venom duct.

The protein localises to the secreted. Probable neurotoxin that inhibits ion channels. The sequence is that of Conotoxin Lt9a from Conus litteratus (Lettered cone).